The sequence spans 500 residues: Matrilin-1 (500 aa).

The N-terminal stretch at 1–29 (MKVTSGPAFALCSLLLLLLLLLQVPDSLS) is a signal peptide. Residues 30 to 226 (LVPQPRGHLC…AKKFQEAFCV (197 aa)) form the VWFA 1 domain. N80 carries N-linked (GlcNAc...) asparagine glycosylation. The EGF-like domain occupies 227–267 (VSDLCATGDHDCEQLCVSSPGSYTCACHEGFTLNSDGKTCN). 3 cysteine pairs are disulfide-bonded: C231–C242, C238–C251, and C253–C266. Residues 268 to 457 (VCRGGGSGSA…GKKLQKQICV (190 aa)) form the VWFA 2 domain. Residue N348 is glycosylated (N-linked (GlcNAc...) asparagine). A coiled-coil region spans residues 471-499 (EAKVEGLLQALTRKLEAVSGRLAVLENRI).

As to quaternary structure, homotrimer. Part of a complex composed of MATN1 (via VWFA1 domain), type 2 collagens and type 6 collagens. Forms a complex (via covalent bonds) with ACAN; the interaction increases in abundance with increasing age of the organism via an increase in occupancy of MATN1 binding sites. Interacts with COMP. In terms of processing, N-glycosylated; reduces binding affinity for type 2 collagens. In terms of tissue distribution, expressed in femoral head articular cartilage. Expressed in the trachea and extraskeletal tissue around the eye.

The protein localises to the secreted. It localises to the extracellular space. Its subcellular location is the extracellular matrix. A major component of the extracellular matrix of non-articular cartilage. Binds to type 2 collagens and forms long concatenated protein networks as part of the extracellular matrix. Required for the network-like organization and bundling of collagen fibrils surrounding chondrocytes in the zones of maturation and hypertrophy. Required for mechanotransduction and adaption to mechanical loading in cartilage chondrocytes, resulting in an increase in expression of the extracellular matrix components ACAN and COL2A1. Acts as a moderator of angiogenesis in response to injury. This is Matrilin-1 from Mus musculus (Mouse).